Consider the following 684-residue polypeptide: Acetyl-coenzyme A synthetase 2 (684 aa).

CoA contacts are provided by residues 207–210 (RGGK) and Thr-326. Residues 402–404 (GEP), 426–431 (DTMWQT), Asp-517, and Arg-532 each bind ATP. Ser-540 serves as a coordination point for CoA. Arg-543 is an ATP binding site. Arg-613 serves as a coordination point for CoA.

The protein belongs to the ATP-dependent AMP-binding enzyme family.

The enzyme catalyses acetate + ATP + CoA = acetyl-CoA + AMP + diphosphate. The polypeptide is Acetyl-coenzyme A synthetase 2 (ACS2) (Kluyveromyces lactis (strain ATCC 8585 / CBS 2359 / DSM 70799 / NBRC 1267 / NRRL Y-1140 / WM37) (Yeast)).